The primary structure comprises 109 residues: uncharacterized protein (109 aa).

This is an uncharacterized protein from Caenorhabditis elegans.